Consider the following 360-residue polypeptide: Phospho-N-acetylmuramoyl-pentapeptide-transferase (360 aa).

Helical transmembrane passes span 24-44, 69-89, 92-112, 133-153, 158-178, 199-219, 239-259, 263-283, 288-308, and 337-357; these read RAVM…PWTI, GTPT…TLLW, WANP…ALGF, MVWQ…LAAN, ILIV…GFLV, GLAT…AYAS, VVIF…FNAY, VFMG…VAVI, FVLV…MLQV, and QVVV…LSTL.

Belongs to the glycosyltransferase 4 family. MraY subfamily. Mg(2+) serves as cofactor.

Its subcellular location is the cell inner membrane. The enzyme catalyses UDP-N-acetyl-alpha-D-muramoyl-L-alanyl-gamma-D-glutamyl-meso-2,6-diaminopimeloyl-D-alanyl-D-alanine + di-trans,octa-cis-undecaprenyl phosphate = di-trans,octa-cis-undecaprenyl diphospho-N-acetyl-alpha-D-muramoyl-L-alanyl-D-glutamyl-meso-2,6-diaminopimeloyl-D-alanyl-D-alanine + UMP. Its pathway is cell wall biogenesis; peptidoglycan biosynthesis. Its function is as follows. Catalyzes the initial step of the lipid cycle reactions in the biosynthesis of the cell wall peptidoglycan: transfers peptidoglycan precursor phospho-MurNAc-pentapeptide from UDP-MurNAc-pentapeptide onto the lipid carrier undecaprenyl phosphate, yielding undecaprenyl-pyrophosphoryl-MurNAc-pentapeptide, known as lipid I. This chain is Phospho-N-acetylmuramoyl-pentapeptide-transferase, found in Neisseria meningitidis serogroup C / serotype 2a (strain ATCC 700532 / DSM 15464 / FAM18).